The chain runs to 69 residues: Protein transport protein Sec61 subunit gamma-1 (69 aa).

M1 carries the post-translational modification N-acetylmethionine. Residues 1–32 (MDAIDSVVDPLRDFAKDSIRLVKRCHKPDRKE) are Cytoplasmic-facing. A helical membrane pass occupies residues 33-61 (FTKVAVRTAIGFVVMGFVGFFVKLIFIPI). Over 62–69 (NNIIVGAT) the chain is Extracellular.

This sequence belongs to the SecE/SEC61-gamma family. Heterotrimeric complex composed of SEC61-alpha, SEC61-beta and SEC61-gamma.

The protein resides in the endoplasmic reticulum membrane. Its function is as follows. Necessary for protein translocation in the endoplasmic reticulum. The sequence is that of Protein transport protein Sec61 subunit gamma-1 (SEC61G1) from Arabidopsis thaliana (Mouse-ear cress).